The following is a 763-amino-acid chain: Phosphoglycerol transferase I (763 aa).

Helical transmembrane passes span 1–21 (MSEL…AWKA), 26–46 (WWFA…ITLY), 77–97 (ILPG…LGWV), and 108–128 (FGYS…SPAF).

It belongs to the OpgB family.

It localises to the cell inner membrane. It catalyses the reaction a phosphatidylglycerol + a membrane-derived-oligosaccharide D-glucose = a 1,2-diacyl-sn-glycerol + a membrane-derived-oligosaccharide 6-(glycerophospho)-D-glucose.. It participates in glycan metabolism; osmoregulated periplasmic glucan (OPG) biosynthesis. In terms of biological role, transfers a phosphoglycerol residue from phosphatidylglycerol to the membrane-bound nascent glucan backbones. The protein is Phosphoglycerol transferase I of Citrobacter koseri (strain ATCC BAA-895 / CDC 4225-83 / SGSC4696).